An 807-amino-acid chain; its full sequence is Leucine--tRNA ligase (807 aa).

A 'HIGH' region motif is present at residues 40 to 51; sequence PYPSGQGLHVGH. Positions 575–579 match the 'KMSKS' region motif; that stretch reads KMSKS. ATP is bound at residue Lys-578.

The protein belongs to the class-I aminoacyl-tRNA synthetase family.

The protein resides in the cytoplasm. It carries out the reaction tRNA(Leu) + L-leucine + ATP = L-leucyl-tRNA(Leu) + AMP + diphosphate. The sequence is that of Leucine--tRNA ligase from Latilactobacillus sakei subsp. sakei (strain 23K) (Lactobacillus sakei subsp. sakei).